A 66-amino-acid polypeptide reads, in one-letter code: Small ribosomal subunit protein bS21 (66 aa).

Belongs to the bacterial ribosomal protein bS21 family.

The chain is Small ribosomal subunit protein bS21 from Solidesulfovibrio magneticus (strain ATCC 700980 / DSM 13731 / RS-1) (Desulfovibrio magneticus).